The chain runs to 305 residues: Serine/threonine-protein kinase 16 (305 aa).

A lipid anchor (N-myristoyl glycine) is attached at Gly2. S-palmitoyl cysteine attachment occurs at residues Cys6 and Cys8. The 274-residue stretch at 20–293 (YLFIQKLGEG…PLLLSQLEAL (274 aa)) folds into the Protein kinase domain. Residues 26 to 34 (LGEGGFSYV) and Lys49 contribute to the ATP site. Catalysis depends on Asp148, which acts as the Proton acceptor. The interval 166–202 (DLGSMNQACIHVEGSRQALTLQDWAAQRCTISYRAPE) is activation loop. Residue Thr185 is modified to Phosphothreonine; by autocatalysis. Ser197 is modified (phosphoserine; by autocatalysis). A Phosphotyrosine; by autocatalysis modification is found at Tyr198.

This sequence belongs to the protein kinase superfamily. Ser/Thr protein kinase family. As to quaternary structure, monomer. Interacts with DRG1 (via its N-terminal); the interaction phosphorylates DRG1. Post-translationally, mainly autophosphorylated on serine/threonine residues. Also autophosphorylated on Tyr-198. In terms of processing, it is uncertain whether palmitoylation is on Cys-6 and/or Cys-8. In terms of tissue distribution, ubiquitously expressed at very low levels.

Its subcellular location is the cytoplasm. The protein resides in the perinuclear region. The protein localises to the membrane. It catalyses the reaction L-seryl-[protein] + ATP = O-phospho-L-seryl-[protein] + ADP + H(+). The catalysed reaction is L-threonyl-[protein] + ATP = O-phospho-L-threonyl-[protein] + ADP + H(+). It carries out the reaction L-tyrosyl-[protein] + ATP = O-phospho-L-tyrosyl-[protein] + ADP + H(+). Membrane-associated protein kinase that phosphorylates on serine and threonine residues. In vitro substrates include DRG1, ENO1 and EIF4EBP1. Also autophosphorylates. May be involved in secretory vesicle trafficking or intracellular signaling. May have a role in regulating stromal-epithelial interactions that occur during ductal morphogenesis in the mammary gland. May be involved in TGF-beta signaling. Able to autophosphorylate on Tyr residue; it is however unclear whether it has tyrosine-protein kinase toward other proteins. This is Serine/threonine-protein kinase 16 (STK16) from Homo sapiens (Human).